Consider the following 220-residue polypeptide: Ribosomal RNA large subunit methyltransferase E (220 aa).

S-adenosyl-L-methionine is bound by residues Gly60, Trp62, Asp92, Asp108, and Asp133. Lys173 serves as the catalytic Proton acceptor.

This sequence belongs to the class I-like SAM-binding methyltransferase superfamily. RNA methyltransferase RlmE family.

It localises to the cytoplasm. It carries out the reaction uridine(2552) in 23S rRNA + S-adenosyl-L-methionine = 2'-O-methyluridine(2552) in 23S rRNA + S-adenosyl-L-homocysteine + H(+). In terms of biological role, specifically methylates the uridine in position 2552 of 23S rRNA at the 2'-O position of the ribose in the fully assembled 50S ribosomal subunit. In Burkholderia thailandensis (strain ATCC 700388 / DSM 13276 / CCUG 48851 / CIP 106301 / E264), this protein is Ribosomal RNA large subunit methyltransferase E.